Consider the following 1058-residue polypeptide: Carbamoyl phosphate synthase large chain (1058 aa).

The carboxyphosphate synthetic domain stretch occupies residues 1–401 (MPKRTDIQKI…SLLKACRSLE (401 aa)). 12 residues coordinate ATP: Arg129, Arg169, Gly175, Gly176, Arg208, Ile210, Glu215, Gly241, Ile242, His243, Gln284, and Glu298. The ATP-grasp 1 domain occupies 133 to 327 (KQLMEELEQP…IAKLAAKIAV (195 aa)). Positions 284, 298, and 300 each coordinate Mg(2+). Mn(2+) is bound by residues Gln284, Glu298, and Asn300. The segment at 402–546 (IGVHHNEIPE…YSTYGWENES (145 aa)) is oligomerization domain. A carbamoyl phosphate synthetic domain region spans residues 547-929 (IRSDKESVLV…ALYKAFEASY (383 aa)). An ATP-grasp 2 domain is found at 671-861 (EQALKELDIP…MAQVATKLIL (191 aa)). ATP contacts are provided by Arg707, Ser746, Ile748, Glu752, Gly777, Val778, His779, Ser780, Gln820, and Glu832. The Mg(2+) site is built by Gln820, Glu832, and Asn834. Positions 820, 832, and 834 each coordinate Mn(2+). In terms of domain architecture, MGS-like spans 930–1058 (LHLPTFGNVV…ESRSFVTEAI (129 aa)). The segment at 930 to 1058 (LHLPTFGNVV…ESRSFVTEAI (129 aa)) is allosteric domain.

The protein belongs to the CarB family. Composed of two chains; the small (or glutamine) chain promotes the hydrolysis of glutamine to ammonia, which is used by the large (or ammonia) chain to synthesize carbamoyl phosphate. Tetramer of heterodimers (alpha,beta)4. Mg(2+) serves as cofactor. Mn(2+) is required as a cofactor.

The enzyme catalyses hydrogencarbonate + L-glutamine + 2 ATP + H2O = carbamoyl phosphate + L-glutamate + 2 ADP + phosphate + 2 H(+). The catalysed reaction is hydrogencarbonate + NH4(+) + 2 ATP = carbamoyl phosphate + 2 ADP + phosphate + 2 H(+). It functions in the pathway amino-acid biosynthesis; L-arginine biosynthesis; carbamoyl phosphate from bicarbonate: step 1/1. Its pathway is pyrimidine metabolism; UMP biosynthesis via de novo pathway; (S)-dihydroorotate from bicarbonate: step 1/3. Large subunit of the glutamine-dependent carbamoyl phosphate synthetase (CPSase). CPSase catalyzes the formation of carbamoyl phosphate from the ammonia moiety of glutamine, carbonate, and phosphate donated by ATP, constituting the first step of 2 biosynthetic pathways, one leading to arginine and/or urea and the other to pyrimidine nucleotides. The large subunit (synthetase) binds the substrates ammonia (free or transferred from glutamine from the small subunit), hydrogencarbonate and ATP and carries out an ATP-coupled ligase reaction, activating hydrogencarbonate by forming carboxy phosphate which reacts with ammonia to form carbamoyl phosphate. This is Carbamoyl phosphate synthase large chain from Streptococcus pneumoniae (strain Hungary19A-6).